The primary structure comprises 3380 residues: Apolipophorins (3380 aa).

The first 21 residues, 1–21 (MGTPPHIWFLLILAISSGGLS), serve as a signal peptide directing secretion. In terms of domain architecture, Vitellogenin spans 40-646 (YQKGQTYTYS…SQSSYLPRSV (607 aa)). 6 N-linked (GlcNAc...) asparagine glycosylation sites follow: N132, N649, N969, N2174, N2851, and N3177. The VWFD domain maps to 2815-2979 (ATAILLNSHH…NAWKVDAQCA (165 aa)). An intrachain disulfide couples C2839 to C2978.

Post-translationally, cleaved into 2 chains by furin protease. However, prevention of cleavage does not impair its function. N-glycosylated. Present in brain, hemolymph, fat body and eyes.

It localises to the secreted. In terms of biological role, constitutes the major component of lipophorin, which mediates transport for various types of lipids in hemolymph. Acts by forming lipoprotein particles that bind lipoproteins and lipids. May be required for morphogens wingless (wg) and hedgehog (hh) function, possibly by acting as vehicles for the movement of wg and hh. In Locusta migratoria (Migratory locust), this protein is Apolipophorins.